The sequence spans 392 residues: Formate-dependent phosphoribosylglycinamide formyltransferase (392 aa).

N(1)-(5-phospho-beta-D-ribosyl)glycinamide is bound by residues 22-23 (EL) and glutamate 82. ATP-binding positions include arginine 114, lysine 155, 160–165 (SSGKGQ), 195–198 (EGVV), and glutamate 203. One can recognise an ATP-grasp domain in the interval 119–308 (RLAAEELGLP…EFALHVRAFL (190 aa)). Glutamate 267 and glutamate 279 together coordinate Mg(2+). Residues aspartate 286, lysine 355, and 362–363 (RR) each bind N(1)-(5-phospho-beta-D-ribosyl)glycinamide.

The protein belongs to the PurK/PurT family. Homodimer.

It carries out the reaction N(1)-(5-phospho-beta-D-ribosyl)glycinamide + formate + ATP = N(2)-formyl-N(1)-(5-phospho-beta-D-ribosyl)glycinamide + ADP + phosphate + H(+). It functions in the pathway purine metabolism; IMP biosynthesis via de novo pathway; N(2)-formyl-N(1)-(5-phospho-D-ribosyl)glycinamide from N(1)-(5-phospho-D-ribosyl)glycinamide (formate route): step 1/1. Its function is as follows. Involved in the de novo purine biosynthesis. Catalyzes the transfer of formate to 5-phospho-ribosyl-glycinamide (GAR), producing 5-phospho-ribosyl-N-formylglycinamide (FGAR). Formate is provided by PurU via hydrolysis of 10-formyl-tetrahydrofolate. This Salmonella choleraesuis (strain SC-B67) protein is Formate-dependent phosphoribosylglycinamide formyltransferase.